A 34-amino-acid polypeptide reads, in one-letter code: Protein HRURF (34 aa).

May function as an inhibitory translational control element that can negatively regulate protein translation of HR gene. In Homo sapiens (Human), this protein is Protein HRURF.